Consider the following 109-residue polypeptide: Nucleoid-associated protein Sbal223_1770 (109 aa).

This sequence belongs to the YbaB/EbfC family. Homodimer.

The protein localises to the cytoplasm. It is found in the nucleoid. Functionally, binds to DNA and alters its conformation. May be involved in regulation of gene expression, nucleoid organization and DNA protection. In Shewanella baltica (strain OS223), this protein is Nucleoid-associated protein Sbal223_1770.